The primary structure comprises 38 residues: Large ribosomal subunit protein bL36A (38 aa).

This sequence belongs to the bacterial ribosomal protein bL36 family.

In Prochlorococcus marinus (strain MIT 9515), this protein is Large ribosomal subunit protein bL36A.